The primary structure comprises 261 residues: Thiazole synthase (261 aa).

Lys101 serves as the catalytic Schiff-base intermediate with DXP. 1-deoxy-D-xylulose 5-phosphate contacts are provided by residues Gly162, Ala188–Gly189, and Asn210–Thr211.

This sequence belongs to the ThiG family. Homotetramer. Forms heterodimers with either ThiH or ThiS.

It localises to the cytoplasm. The catalysed reaction is [ThiS sulfur-carrier protein]-C-terminal-Gly-aminoethanethioate + 2-iminoacetate + 1-deoxy-D-xylulose 5-phosphate = [ThiS sulfur-carrier protein]-C-terminal Gly-Gly + 2-[(2R,5Z)-2-carboxy-4-methylthiazol-5(2H)-ylidene]ethyl phosphate + 2 H2O + H(+). The protein operates within cofactor biosynthesis; thiamine diphosphate biosynthesis. Its function is as follows. Catalyzes the rearrangement of 1-deoxy-D-xylulose 5-phosphate (DXP) to produce the thiazole phosphate moiety of thiamine. Sulfur is provided by the thiocarboxylate moiety of the carrier protein ThiS. In vitro, sulfur can be provided by H(2)S. This is Thiazole synthase from Aromatoleum aromaticum (strain DSM 19018 / LMG 30748 / EbN1) (Azoarcus sp. (strain EbN1)).